Here is a 1531-residue protein sequence, read N- to C-terminus: Probable outer membrane protein PmpD (1531 aa).

Positions 1–20 are cleaved as a signal peptide; that stretch reads MSSEKDIKSTCSKFSLSVVA. The Autotransporter domain occupies 1244–1531; it reads EFDYSTNVWG…EANTGLRLIF (288 aa).

Belongs to the PMP outer membrane protein family.

It is found in the secreted. The protein resides in the cell wall. It localises to the cell outer membrane. The protein is Probable outer membrane protein PmpD (pmpD) of Chlamydia trachomatis serovar D (strain ATCC VR-885 / DSM 19411 / UW-3/Cx).